The following is a 244-amino-acid chain: Flavin-dependent thymidylate synthase (244 aa).

The ThyX domain occupies 2 to 207 (VRVTLVNYTK…DIRPIIKWAK (206 aa)). FAD contacts are provided by residues Ser-56, 80-82 (RHR), and Gln-88. Residues 77–80 (QLVR), 88–92 (QQSQR), and Arg-146 contribute to the dUMP site. A ThyX motif motif is present at residues 80–90 (RHRIASYTQQS). FAD is bound by residues 162–164 (NLR) and His-168. Arg-173 contacts dUMP. Catalysis depends on Arg-173, which acts as the Involved in ionization of N3 of dUMP, leading to its activation.

It belongs to the thymidylate synthase ThyX family. In terms of assembly, homotetramer. The cofactor is FAD.

It catalyses the reaction dUMP + (6R)-5,10-methylene-5,6,7,8-tetrahydrofolate + NADPH + H(+) = dTMP + (6S)-5,6,7,8-tetrahydrofolate + NADP(+). It functions in the pathway pyrimidine metabolism; dTTP biosynthesis. Functionally, catalyzes the reductive methylation of 2'-deoxyuridine-5'-monophosphate (dUMP) to 2'-deoxythymidine-5'-monophosphate (dTMP) while utilizing 5,10-methylenetetrahydrofolate (mTHF) as the methyl donor, and NADPH and FADH(2) as the reductant. The protein is Flavin-dependent thymidylate synthase of Pyrococcus furiosus (strain ATCC 43587 / DSM 3638 / JCM 8422 / Vc1).